Consider the following 104-residue polypeptide: Large ribosomal subunit protein bL21 (104 aa).

Belongs to the bacterial ribosomal protein bL21 family. Part of the 50S ribosomal subunit. Contacts protein L20.

Functionally, this protein binds to 23S rRNA in the presence of protein L20. The protein is Large ribosomal subunit protein bL21 of Leptospira interrogans serogroup Icterohaemorrhagiae serovar copenhageni (strain Fiocruz L1-130).